The chain runs to 357 residues: tRNA N6-adenosine threonylcarbamoyltransferase (357 aa).

Residues His115 and His119 each coordinate Fe cation. Substrate contacts are provided by residues 137–141, Asp170, Gly183, and Asn281; that span reads LASGG. Asp309 contacts Fe cation.

Belongs to the KAE1 / TsaD family. Fe(2+) is required as a cofactor.

Its subcellular location is the cytoplasm. It carries out the reaction L-threonylcarbamoyladenylate + adenosine(37) in tRNA = N(6)-L-threonylcarbamoyladenosine(37) in tRNA + AMP + H(+). In terms of biological role, required for the formation of a threonylcarbamoyl group on adenosine at position 37 (t(6)A37) in tRNAs that read codons beginning with adenine. Is involved in the transfer of the threonylcarbamoyl moiety of threonylcarbamoyl-AMP (TC-AMP) to the N6 group of A37, together with TsaE and TsaB. TsaD likely plays a direct catalytic role in this reaction. This Nitrobacter winogradskyi (strain ATCC 25391 / DSM 10237 / CIP 104748 / NCIMB 11846 / Nb-255) protein is tRNA N6-adenosine threonylcarbamoyltransferase.